The sequence spans 482 residues: Probable 2-carboxy-D-arabinitol-1-phosphatase (482 aa).

The N-terminal 34 residues, 1–34, are a transit peptide targeting the chloroplast; sequence MISLPLTTPILPSRCLLHKTRRQNSTRRRLLIRS. Residue His-55 is the Tele-phosphohistidine intermediate of the active site. The active-site Proton donor/acceptor is Glu-129.

The protein belongs to the phosphoglycerate mutase family.

Its subcellular location is the plastid. The protein localises to the chloroplast stroma. It carries out the reaction 2-carboxy-D-arabinitol 1-phosphate + H2O = 2-carboxy-D-arabinitol + phosphate. Phosphoglycerate mutase-like protein lacking PGM activity, but having 2-carboxy-D-arabinitol 1-phosphate (CA1P) phosphatase activity. Prevents the accumulation of D-glycero-2,3-pentodiulose-1,5-bisphosphate (PDBP) a potent inhibitor of ribulose-1,5-bisphosphate carboxylase (RuBisCO). PDBP is produced during the oxidation of ribulose-1,5-bisphosphate, the substrate of RuBisCO. The polypeptide is Probable 2-carboxy-D-arabinitol-1-phosphatase (Arabidopsis thaliana (Mouse-ear cress)).